The sequence spans 338 residues: Mitoferrin-1 (338 aa).

The tract at residues 1-37 (MELRRGGVGSQAAGRRMDGDCRDGGCGSKDAGSEDYE) is disordered. Solcar repeat units follow at residues 43 to 131 (ASVS…MKRT), 141 to 225 (NSHL…LQEQ), and 232 to 326 (YNPQ…FKYF). 6 helical membrane-spanning segments follow: residues 45–64 (VSTHMTAGAMAGILEHSIMY), 106–125 (GLNVMMMGAGPAHAMYFACY), 143–162 (HLANGIAGSMATLLHDAVMN), 200–219 (SYTTQLTMNIPFQSIHFITY), 234–253 (PQSHIISGGLAGALAAAATT), and 301–320 (GIQARVIYQMPSTAISWSVY).

It belongs to the mitochondrial carrier (TC 2.A.29) family. As to quaternary structure, interacts with ACB10; this interaction stabilizes SLC25A37 and enhances the function of SLC25A37 to import mitochondrial iron during erythroid differentiation.

The protein resides in the mitochondrion inner membrane. The enzyme catalyses Fe(2+)(in) = Fe(2+)(out). Functionally, mitochondrial iron transporter that specifically mediates iron uptake in developing erythroid cells, thereby playing an essential role in heme biosynthesis. This is Mitoferrin-1 (Slc25a37) from Rattus norvegicus (Rat).